The chain runs to 179 residues: UPF0303 protein P4H10.12 (179 aa).

The protein belongs to the UPF0303 family.

The chain is UPF0303 protein P4H10.12 from Schizosaccharomyces pombe (strain 972 / ATCC 24843) (Fission yeast).